The sequence spans 273 residues: Phycobilisome 32.1 kDa linker polypeptide, phycocyanin-associated, rod 2 (273 aa).

The 180-residue stretch at 1–180 folds into the PBS-linker domain; it reads MTSLVSAQRL…VYRGYATSDR (180 aa). Residues 220–273 enclose the CpcD-like domain; that stretch reads NQMYRLQVIQGAAPGRGTRVRRGKAEYLVSYDNLSAKLQQINRQGDTVTMISLA.

This sequence belongs to the phycobilisome linker protein family. As to quaternary structure, part of 2 PBS rod complexes, the conventional CpcG-PBS rod and a photosystem I-specific CpcL-PBS rod, both of which include ferredoxin--NADP reductase (petH). CpcG-PBS has on average 3 stacked phycocyanin hexamers (PC, CpcA and CpcB). Linker CpcG connects the PC stack to the thylakoid, the hexamers are linked by 1 copy of CpcC1, 1 copy of CpcC2 and the stack is terminated by a single copy of CpcD. The CpcL-PBS has on average 5 stacked phycocyanin hexamers (PC, CpcA and CpcB). Linker CpcL connects the PC stack to the thylakoid, the hexamers are linked by 1 copy of CpcC1, 3 copies of CpcC2 and the stack is terminated by a single copy of CpcD. Interacts with the C-phycocyanin (PC) beta subunit (cpcB), it may fit into the center of the PC hexamer.

The protein localises to the cellular thylakoid membrane. In terms of biological role, rod linker protein, associated with phycocyanin. Linker polypeptides determine the state of aggregation and the location of the disk-shaped phycobiliprotein units within the phycobilisome and modulate their spectroscopic properties in order to mediate a directed and optimal energy transfer. This Synechocystis sp. (strain ATCC 27184 / PCC 6803 / Kazusa) protein is Phycobilisome 32.1 kDa linker polypeptide, phycocyanin-associated, rod 2 (cpcC2).